Here is a 335-residue protein sequence, read N- to C-terminus: Probable deoxyhypusine synthase (335 aa).

K308 serves as the catalytic Nucleophile.

This sequence belongs to the deoxyhypusine synthase family. The cofactor is NAD(+).

The catalysed reaction is [eIF5A protein]-L-lysine + spermidine = [eIF5A protein]-deoxyhypusine + propane-1,3-diamine. It functions in the pathway protein modification; eIF5A hypusination. In terms of biological role, catalyzes the NAD-dependent oxidative cleavage of spermidine and the subsequent transfer of the butylamine moiety of spermidine to the epsilon-amino group of a specific lysine residue of the eIF-5A precursor protein to form the intermediate deoxyhypusine residue. The chain is Probable deoxyhypusine synthase from Thermococcus onnurineus (strain NA1).